A 161-amino-acid polypeptide reads, in one-letter code: Probable calcium-binding protein CML16 (161 aa).

4 consecutive EF-hand domains span residues 8-43 (DQIK…LGIK), 44-79 (PRGD…DINE), 83-118 (INQE…MGHP), and 119-154 (LTYR…SAAD). Ca(2+)-binding residues include D21, D23, D25, S27, E32, D57, N59, N61, S63, E68, D96, D98, N100, S102, E107, D132, N134, D136, and E143.

Its function is as follows. Potential calcium sensor. The polypeptide is Probable calcium-binding protein CML16 (CML16) (Arabidopsis thaliana (Mouse-ear cress)).